The following is a 210-amino-acid chain: Glutathione S-transferase 4 (210 aa).

The GST N-terminal domain maps to 1-80; the sequence is MDFYYLPLSA…YLVEKYGKQD (80 aa). Residues S9, 50–52, and 64–66 contribute to the glutathione site; these read HTI and ESR. The GST C-terminal domain maps to 87-208; sequence CPKKRALINQ…AGALEMKTLI (122 aa).

Belongs to the GST superfamily. Theta family. Homodimer.

It catalyses the reaction RX + glutathione = an S-substituted glutathione + a halide anion + H(+). Conjugation of reduced glutathione to a wide number of exogenous and endogenous hydrophobic electrophiles. This chain is Glutathione S-transferase 4 (Gst4), found in Musca domestica (House fly).